Here is a 261-residue protein sequence, read N- to C-terminus: MSKLIPVIKVNNLSFYYDTQKILEGVSMEIYQSKVTAIIGPSGCGKSTFLKCLNRMNELESEVRVEGRVEFFNQNIYERRVNLNRLRRQVSMVHPKPNLFPMSVYDNVAYGVKIVGWRPKLEIDDIVESALKDADLWDEIKHKIHKSALDLSGGQQQRLCIARALAVKPKVLLMDEPCFGLDPIASMKVESLIQSLRLRSELTMVIVSHNLSQVSRVSDFTAFFKGNENRIGQLVEFGLTKKMFNSPHDSRTREYVLSRLG.

Positions 8 to 256 (IKVNNLSFYY…PHDSRTREYV (249 aa)) constitute an ABC transporter domain. ATP is bound at residue 40–47 (GPSGCGKS).

It belongs to the ABC transporter superfamily. Phosphate importer (TC 3.A.1.7) family. In terms of assembly, the complex is composed of two ATP-binding proteins (PstB), two transmembrane proteins (PstC and PstA) and a solute-binding protein (PstS).

Its subcellular location is the cell inner membrane. It carries out the reaction phosphate(out) + ATP + H2O = ADP + 2 phosphate(in) + H(+). Its function is as follows. Part of the ABC transporter complex PstSACB involved in phosphate import. Responsible for energy coupling to the transport system. The protein is Phosphate import ATP-binding protein PstB 1 of Nostoc sp. (strain PCC 7120 / SAG 25.82 / UTEX 2576).